Reading from the N-terminus, the 499-residue chain is Putative antiporter subunit mnhD2 (499 aa).

14 helical membrane-spanning segments follow: residues 1–21 (MSNL…ILVF), 31–51 (ILSI…LIYV), 77–97 (LSLL…AYGF), 107–127 (FHLP…FLTS), 129–149 (LFNL…LVTL), 160–180 (IVYV…IGML), 208–228 (ISLV…FMWL), 239–259 (LAAL…IRFF), 272–292 (TLLV…VIAY), 307–327 (IGFI…GAIF), 329–349 (LAND…LVYM), 367–387 (FFGV…PFSG), 402–422 (GNYI…YSLF), and 449–469 (GLLS…PVVL).

Belongs to the CPA3 antiporters (TC 2.A.63) subunit D family. As to quaternary structure, may form a heterooligomeric complex that consists of seven subunits: mnhA2, mnhB2, mnhC2, mnhD2, mnhE2, mnhF2 and mnhG2.

The protein resides in the cell membrane. The chain is Putative antiporter subunit mnhD2 (mnhD2) from Staphylococcus epidermidis (strain ATCC 35984 / DSM 28319 / BCRC 17069 / CCUG 31568 / BM 3577 / RP62A).